The sequence spans 427 residues: Indole diterpene prenyltransferase idtF (427 aa).

Residues R97, K195, R264, K266, Y268, and Y352 each coordinate substrate.

This sequence belongs to the tryptophan dimethylallyltransferase family.

It functions in the pathway secondary metabolite biosynthesis. Indole diterpene prenyltransferase; part of the gene cluster that mediates the biosynthesis of paspalitrems, indole-diterpene (IDT) mycotoxins that are potent tremorgens in mammals. The geranylgeranyl diphosphate (GGPP) synthase idtG is proposed to catalyze the first step in IDT biosynthesis via catalysis of a series of iterative condensations of isopentenyl diphosphate (IPP) with dimethylallyl diphosphate (DMAPP), geranyl diphosphate (GPP), and farnesyl diphosphate (FPP), to form GGPP. Condensation of indole-3-glycerol phosphate with GGPP by the prenyltransferase idtC then forms 3-geranylgeranylindole (3-GGI). Epoxidation of the two terminal alkenes of the geranylgeranyl moiety by the FAD-dependent monooxygenase idtM, and cyclization by the terpene cyclase idtB then leads to the production of paspaline. The cytochrome P450 monooxygenase idtP then catalyzes oxidative elimination of the pendant methyl group at C-12 of paspaline and generates the C-10 ketone to yield 13-desoxypaxilline. The cytochrome P450 monooxygenase idtQ may catalyze the C-13 oxidation of 13-desoxypaxilline to afford paxilline. Considering that both paspalicine and paxilline were detected in C.paspali, idtQ also catalyzes the formation of paspalinine from 13-desoxypaxilline via paspalicine as an intermediate. Finally, the alpha-prenyltransferase idtF prenylates paspalinine at the C-20 or the C-21 positions to yield paspalitrems A and C, respectively. The hydroxylation of paspalitrem A at C-32 by a still unknown oxidase affords paspalitrem B. This is Indole diterpene prenyltransferase idtF from Claviceps paspali (Rye ergot fungus).